Reading from the N-terminus, the 62-residue chain is UPF0370 protein ESA_00777 (62 aa).

A helical membrane pass occupies residues 4–24; that stretch reads LGKYWWVLVLVFLLGVLLNVI. The segment covering 36 to 51 has biased composition (basic and acidic residues); that stretch reads MDNRPELPPHRDFNDK. A disordered region spans residues 36–62; that stretch reads MDNRPELPPHRDFNDKWDDEDDWPKKK. The span at 52–62 shows a compositional bias: acidic residues; the sequence is WDDEDDWPKKK.

Belongs to the UPF0370 family.

It is found in the cell membrane. In Cronobacter sakazakii (strain ATCC BAA-894) (Enterobacter sakazakii), this protein is UPF0370 protein ESA_00777.